Reading from the N-terminus, the 446-residue chain is MNAKEANFDGLVGPTHNYAGLSFGNVASLSNEKSDANPKAAAKQGLRKMKQLADLGFAQGVLPPQERPSLRLLRELGFSGKDADVIAKAAKQAPEMLAAASSASAMWTANAATVSPSADTSDGRVHFTPANLCSKLHRAIEHESTRRTLAAIFADEARFAVHDALPGTPALGDEGAANHTRFCSEYGAPGVEFFVYGRAEYRRGPEPTRFPARQTFEASRAVAQRHGLREEATIYAQQSPDVIDAGVFHNDVIAVGNRDTLFCHERAFVDKQAVYDALTASLGALGARLNVIEVPERAVSVADAVGSYLFNSQLLTREDGRQLLVVPQECRENANVSAYLDALAAGNGPIRDVRVFDLRESMKNGGGPACLRLRVVLNDAERAAVKPNVWIGDALFASLDAWIDKHYRDRLSPADLADPALLEESRTALDELTQILGLGSLYDFQR.

Residues 19-28 (AGLSFGNVAS), asparagine 110, and 137-138 (HR) each bind substrate. Residue glutamate 174 is part of the active site. Arginine 213 contacts substrate. Histidine 249 is an active-site residue. Substrate is bound by residues aspartate 251 and asparagine 364. Catalysis depends on cysteine 370, which acts as the Nucleophile.

This sequence belongs to the succinylarginine dihydrolase family. As to quaternary structure, homodimer.

The enzyme catalyses N(2)-succinyl-L-arginine + 2 H2O + 2 H(+) = N(2)-succinyl-L-ornithine + 2 NH4(+) + CO2. It participates in amino-acid degradation; L-arginine degradation via AST pathway; L-glutamate and succinate from L-arginine: step 2/5. In terms of biological role, catalyzes the hydrolysis of N(2)-succinylarginine into N(2)-succinylornithine, ammonia and CO(2). In Burkholderia thailandensis (strain ATCC 700388 / DSM 13276 / CCUG 48851 / CIP 106301 / E264), this protein is N-succinylarginine dihydrolase.